The following is a 131-amino-acid chain: MMFERSPDDPLPLVYACSGCSNVAQLANDLALRLDRARLAEMSCIAGVGGDVPLLVRRARSGRPILALDGCPLHCVKGCLARHEVVPTLHLTLSEHGLKKRYGEDCEAQDAERLFVELERLLTPGGKRRCE.

In terms of biological role, plays an essential role by modulating the expression of hundreds of genes including quorum sensing system genes and oxidative stress resistance genes under both aerobic and anaerobic conditions. This Pseudomonas aeruginosa (strain ATCC 15692 / DSM 22644 / CIP 104116 / JCM 14847 / LMG 12228 / 1C / PRS 101 / PAO1) protein is Anaerobic and virulence modulator AnvM.